Here is a 684-residue protein sequence, read N- to C-terminus: DNA-directed RNA polymerase subunit beta' (684 aa).

Zn(2+)-binding residues include Cys-69, Cys-71, Cys-87, and Cys-90. The Mg(2+) site is built by Asp-491, Asp-493, and Asp-495.

Belongs to the RNA polymerase beta' chain family. RpoC1 subfamily. As to quaternary structure, in plastids the minimal PEP RNA polymerase catalytic core is composed of four subunits: alpha, beta, beta', and beta''. When a (nuclear-encoded) sigma factor is associated with the core the holoenzyme is formed, which can initiate transcription. Mg(2+) is required as a cofactor. Zn(2+) serves as cofactor.

It localises to the plastid. The protein resides in the chloroplast. The catalysed reaction is RNA(n) + a ribonucleoside 5'-triphosphate = RNA(n+1) + diphosphate. Its function is as follows. DNA-dependent RNA polymerase catalyzes the transcription of DNA into RNA using the four ribonucleoside triphosphates as substrates. This chain is DNA-directed RNA polymerase subunit beta', found in Phaseolus vulgaris (Kidney bean).